The primary structure comprises 834 residues: Ras GTPase-activating protein 3 (834 aa).

2 C2 domains span residues 1-112 (MAVE…DTWF) and 123-263 (VQGK…EAWY). Ala2 is subject to N-acetylalanine. Phosphotyrosine is present on Tyr66. Ser77 carries the post-translational modification Phosphoserine. Thr110 bears the Phosphothreonine mark. The Ras-GAP domain maps to 346–561 (GRVVPFISAI…DAVKNFLDLI (216 aa)). The region spanning 576 to 677 (ILLKEGFMIK…WIDILTKVSQ (102 aa)) is the PH domain. The segment at 679-715 (NQKRLTVFHPSAYLNGHWLCCRASSDTAIGCTPCTGG) adopts a Btk-type zinc-finger fold. Zn(2+)-binding residues include His687, Cys698, Cys699, and Cys709. Phosphoserine is present on residues Ser809 and Ser833.

Functionally, inhibitory regulator of the Ras-cyclic AMP pathway. Binds inositol tetrakisphosphate (IP4). The polypeptide is Ras GTPase-activating protein 3 (Rasa3) (Rattus norvegicus (Rat)).